A 304-amino-acid chain; its full sequence is Glutaminase (304 aa).

Substrate is bound by residues Ser63, Asn114, Glu158, Asn165, Tyr189, Tyr240, and Val258.

It belongs to the glutaminase family. As to quaternary structure, homotetramer.

The enzyme catalyses L-glutamine + H2O = L-glutamate + NH4(+). This is Glutaminase from Shewanella loihica (strain ATCC BAA-1088 / PV-4).